Reading from the N-terminus, the 155-residue chain is MKCPFCGHSNTQVLDTRMSEDGDAVRRRRRCEACDRRFTTYERIELFFPAIVKKNGSRVDYTRAKLKDSMRLALRKRPVSAEAIDEAITRIEEKLLALGEKEIPSSQVGELVMRELRKLDKIAYIRFASVYRSFEDVSEFRDVLDEFAASTPRKG.

Residues Cys3–Cys34 fold into a zinc finger. An ATP-cone domain is found at Pro49–Glu139.

It belongs to the NrdR family. Zn(2+) serves as cofactor.

In terms of biological role, negatively regulates transcription of bacterial ribonucleotide reductase nrd genes and operons by binding to NrdR-boxes. This chain is Transcriptional repressor NrdR, found in Cupriavidus necator (strain ATCC 17699 / DSM 428 / KCTC 22496 / NCIMB 10442 / H16 / Stanier 337) (Ralstonia eutropha).